The following is a 325-amino-acid chain: MAPLTLSVDVKSSSATSHDVSKRVMQSSQLKINKGFFASVNTQEDKPFDFFRTLFEGFIAGGTAGVVVETALYPIDTIKTRLQAARGGGKIVLKGLYSGLAGNIAGVLPASALFVGVYEPTKQKLLKTFPDHLSAVAHLTAGAIGGLAASLIRVPTEVVKQRMQTGQFTSAPSAVRMIASKEGFRGLYAGYRSFLLRDLPFDAIQFCIYEQLCLGYKKAARRELSDPENALIGAFAGALTGAVTTPLDVIKTRLMVQGSAKQYQGIVDCVQTIVREEGAPALLKGIGPRVLWIGIGGSIFFGVLESTKRTLAQRRPNTVKETKEE.

Residues 1 to 38 (MAPLTLSVDVKSSSATSHDVSKRVMQSSQLKINKGFFA) constitute a chloroplast and mitochondrion transit peptide. Solcar repeat units lie at residues 52–124 (RTLF…TKQK), 133–215 (LSAV…LCLG), and 228–310 (ENAL…TKRT). Transmembrane regions (helical) follow at residues 55-75 (FEGFIAGGTAGVVVETALYPI), 97-117 (YSGLAGNIAGVLPASALFVGV), 132-152 (HLSAVAHLTAGAIGGLAASLI), 230-250 (ALIGAFAGALTGAVTTPLDVI), and 285-305 (GIGPRVLWIGIGGSIFFGVLE).

This sequence belongs to the mitochondrial carrier (TC 2.A.29) family. Expressed in seedlings, cotyledons, leaves and flowers. Lower levels of expression in stems and roots. Not detected in senescent leaves, petals and pollen grains.

It is found in the mitochondrion membrane. Its subcellular location is the plastid. The protein localises to the chloroplast membrane. Its activity is regulated as follows. Inhibited strongly by tannic acid, bromocresol purple, mercuric chloride, mersalyl, p-hydroxymercuribenzoate, S-adenosylhomocysteine, S-adenosylcysteine and adenosylornithine, and to a lesser extent by N-ethylmaleimide, bathophenanthroline and pyridoxal-5'-P. Transporter involved in exchange reactions through membranes. Has a low uniporter activity. Specifically mediates the transport of S-adenosylmethionine (SAM) and its closest analogs. Probably involved in the uptake of SAM in exchange for S-adenosylhomocysteine (SAHC), which is produced from SAM in the mitochondrial matrix and plastidial stroma by methyltransferase activities. The chain is S-adenosylmethionine carrier 1, chloroplastic/mitochondrial (SAMC1) from Arabidopsis thaliana (Mouse-ear cress).